The sequence spans 271 residues: Tryptophan synthase alpha chain (271 aa).

Residues Glu-49 and Asp-60 each act as proton acceptor in the active site.

This sequence belongs to the TrpA family. As to quaternary structure, tetramer of two alpha and two beta chains.

It catalyses the reaction (1S,2R)-1-C-(indol-3-yl)glycerol 3-phosphate + L-serine = D-glyceraldehyde 3-phosphate + L-tryptophan + H2O. Its pathway is amino-acid biosynthesis; L-tryptophan biosynthesis; L-tryptophan from chorismate: step 5/5. In terms of biological role, the alpha subunit is responsible for the aldol cleavage of indoleglycerol phosphate to indole and glyceraldehyde 3-phosphate. This chain is Tryptophan synthase alpha chain, found in Burkholderia multivorans (strain ATCC 17616 / 249).